The primary structure comprises 645 residues: ATP-dependent DNA helicase Rep (645 aa).

The UvrD-like helicase ATP-binding domain maps to 1-280 (MSLNFSQKNA…IKMEHNYRSS (280 aa)). ATP-binding positions include 22-29 (AGAGSGKT) and Arg-278. One can recognise a UvrD-like helicase C-terminal domain in the interval 281–562 (GRILKAANSL…QLMTLHASKG (282 aa)).

Belongs to the helicase family. UvrD subfamily. In terms of assembly, homodimer.

It catalyses the reaction Couples ATP hydrolysis with the unwinding of duplex DNA by translocating in the 3'-5' direction.. It carries out the reaction ATP + H2O = ADP + phosphate + H(+). In terms of biological role, rep helicase is a single-stranded DNA-dependent ATPase involved in DNA replication; it can initiate unwinding at a nick in the DNA. It binds to the single-stranded DNA and acts in a progressive fashion along the DNA in the 3' to 5' direction. In Buchnera aphidicola subsp. Acyrthosiphon pisum (strain APS) (Acyrthosiphon pisum symbiotic bacterium), this protein is ATP-dependent DNA helicase Rep.